We begin with the raw amino-acid sequence, 328 residues long: DNA-directed RNA polymerase subunit alpha (328 aa).

Residues Met-1–Ser-231 are alpha N-terminal domain (alpha-NTD). Residues Asp-247–Gly-328 are alpha C-terminal domain (alpha-CTD).

Belongs to the RNA polymerase alpha chain family. In terms of assembly, homodimer. The RNAP catalytic core consists of 2 alpha, 1 beta, 1 beta' and 1 omega subunit. When a sigma factor is associated with the core the holoenzyme is formed, which can initiate transcription.

It carries out the reaction RNA(n) + a ribonucleoside 5'-triphosphate = RNA(n+1) + diphosphate. In terms of biological role, DNA-dependent RNA polymerase catalyzes the transcription of DNA into RNA using the four ribonucleoside triphosphates as substrates. This is DNA-directed RNA polymerase subunit alpha from Chlorobaculum tepidum (strain ATCC 49652 / DSM 12025 / NBRC 103806 / TLS) (Chlorobium tepidum).